We begin with the raw amino-acid sequence, 324 residues long: Acetyl-coenzyme A carboxylase carboxyl transferase subunit alpha (324 aa).

A CoA carboxyltransferase C-terminal domain is found at 44-298 (QLEAKATQLR…KTAIVKSLDD (255 aa)).

The protein belongs to the AccA family. As to quaternary structure, acetyl-CoA carboxylase is a heterohexamer composed of biotin carboxyl carrier protein (AccB), biotin carboxylase (AccC) and two subunits each of ACCase subunit alpha (AccA) and ACCase subunit beta (AccD).

The protein resides in the cytoplasm. It catalyses the reaction N(6)-carboxybiotinyl-L-lysyl-[protein] + acetyl-CoA = N(6)-biotinyl-L-lysyl-[protein] + malonyl-CoA. The protein operates within lipid metabolism; malonyl-CoA biosynthesis; malonyl-CoA from acetyl-CoA: step 1/1. Component of the acetyl coenzyme A carboxylase (ACC) complex. First, biotin carboxylase catalyzes the carboxylation of biotin on its carrier protein (BCCP) and then the CO(2) group is transferred by the carboxyltransferase to acetyl-CoA to form malonyl-CoA. The sequence is that of Acetyl-coenzyme A carboxylase carboxyl transferase subunit alpha from Trichodesmium erythraeum (strain IMS101).